Reading from the N-terminus, the 194-residue chain is uncharacterized protein (194 aa).

Disordered regions lie at residues 1 to 21 (MPKG…APPL) and 73 to 97 (PATV…PWPS). A compositionally biased stretch (pro residues) spans 73–96 (PATVPPPPPGLGPPSERPCPPPWP).

This is an uncharacterized protein from Mus musculus (Mouse).